Consider the following 304-residue polypeptide: Dipeptide transport system permease protein DppC (304 aa).

The tract at residues 1–24 (MKTEHAKPLMTPEPNSPPPEDQYT) is disordered. Transmembrane regions (helical) follow at residues 41–61 (LAIV…FAPL), 108–128 (VGFF…LIAG), 141–161 (IFDI…VAIL), 164–184 (SLQN…GRLV), 227–247 (ATLG…LGLG), and 271–291 (WTVL…NMIG). In terms of domain architecture, ABC transmembrane type-1 spans 102–291 (ARLSLQVGFF…LVVLGFNMIG (190 aa)).

Belongs to the binding-protein-dependent transport system permease family. OppBC subfamily.

The protein localises to the cell membrane. Functionally, probably part of the ABC transporter Dpp involved in dipeptide transport. Responsible for the translocation of the substrate across the membrane. The polypeptide is Dipeptide transport system permease protein DppC (dppC) (Alkalihalophilus pseudofirmus (strain ATCC BAA-2126 / JCM 17055 / OF4) (Bacillus pseudofirmus)).